A 452-amino-acid polypeptide reads, in one-letter code: Exodeoxyribonuclease 7 large subunit (452 aa).

It belongs to the XseA family. In terms of assembly, heterooligomer composed of large and small subunits.

Its subcellular location is the cytoplasm. It carries out the reaction Exonucleolytic cleavage in either 5'- to 3'- or 3'- to 5'-direction to yield nucleoside 5'-phosphates.. In terms of biological role, bidirectionally degrades single-stranded DNA into large acid-insoluble oligonucleotides, which are then degraded further into small acid-soluble oligonucleotides. The sequence is that of Exodeoxyribonuclease 7 large subunit from Bacillus anthracis (strain A0248).